The sequence spans 196 residues: uncharacterized protein (196 aa).

The N-terminal stretch at 1–27 (MSVLSRAVQLAFVALGLCLFFSNLVAA) is a signal peptide.

Its subcellular location is the secreted. This is an uncharacterized protein from Arthroderma benhamiae (strain ATCC MYA-4681 / CBS 112371) (Trichophyton mentagrophytes).